A 510-amino-acid chain; its full sequence is 2,3-bisphosphoglycerate-independent phosphoglycerate mutase (510 aa).

Positions 16 and 66 each coordinate Mn(2+). The active-site Phosphoserine intermediate is the S66. Substrate is bound by residues H127, 156–157 (RD), R186, R192, 257–260 (RADR), and K333. Mn(2+)-binding residues include D400, H404, D441, H442, and H460.

The protein belongs to the BPG-independent phosphoglycerate mutase family. As to quaternary structure, monomer. Requires Mn(2+) as cofactor.

The enzyme catalyses (2R)-2-phosphoglycerate = (2R)-3-phosphoglycerate. It participates in carbohydrate degradation; glycolysis; pyruvate from D-glyceraldehyde 3-phosphate: step 3/5. Catalyzes the interconversion of 2-phosphoglycerate and 3-phosphoglycerate. This is 2,3-bisphosphoglycerate-independent phosphoglycerate mutase from Gluconobacter oxydans (strain 621H) (Gluconobacter suboxydans).